We begin with the raw amino-acid sequence, 112 residues long: Protein BEX3 (112 aa).

The interval 1 to 45 is disordered; sequence MANIHQENEEMEQPVQNGEEDRPLGGGEGHQPERNHRRGQARRLA. The interaction with p75NTR/NGFR stretch occupies residues 69–94; the sequence is EIFMEEMREIRRKLRELQLRNCLRIL. The interaction with 14-3-3 epsilon stretch occupies residues 69–112; that stretch reads EIFMEEMREIRRKLRELQLRNCLRILMGELSNHHDHHDEFCLMP. Positions 78–88 match the Nuclear export signal motif; sequence IRRKLRELQLR. The tract at residues 101–105 is his cluster; sequence HHDHH. Position 109 (Cys109) interacts with Zn(2+).

The protein belongs to the BEX family. As to quaternary structure, self-associates. Binds to the DEATH domain of p75NTR/NGFR. Interacts with 14-3-3 epsilon (YWHAE). Interacts with DIABLO/SMAC. Post-translationally, ubiquitinated. Degraded by the proteasome.

The protein resides in the nucleus. It localises to the cytoplasm. The protein localises to the cytosol. Functionally, may be a signaling adapter molecule involved in NGFR/p75NTR-mediated apoptosis induced by NGF. Plays a role in zinc-triggered neuronal death. In absence of reductive stress, acts as a pseudosubstrate for the CRL2(FEM1B) complex: associates with FEM1B via zinc, thereby preventing association between FEM1B and its substrates. This Bos taurus (Bovine) protein is Protein BEX3.